A 278-amino-acid chain; its full sequence is 4-diphosphocytidyl-2-C-methyl-D-erythritol kinase (278 aa).

The active site involves K9. P89 to A99 is an ATP binding site. D128 is a catalytic residue.

This sequence belongs to the GHMP kinase family. IspE subfamily.

It catalyses the reaction 4-CDP-2-C-methyl-D-erythritol + ATP = 4-CDP-2-C-methyl-D-erythritol 2-phosphate + ADP + H(+). It participates in isoprenoid biosynthesis; isopentenyl diphosphate biosynthesis via DXP pathway; isopentenyl diphosphate from 1-deoxy-D-xylulose 5-phosphate: step 3/6. Its function is as follows. Catalyzes the phosphorylation of the position 2 hydroxy group of 4-diphosphocytidyl-2C-methyl-D-erythritol. This Cereibacter sphaeroides (strain ATCC 17029 / ATH 2.4.9) (Rhodobacter sphaeroides) protein is 4-diphosphocytidyl-2-C-methyl-D-erythritol kinase.